We begin with the raw amino-acid sequence, 123 residues long: Putative C-type lectin protein FPV003/FPV258 (123 aa).

Positions 21–122 constitute a C-type lectin domain; that stretch reads CRGPYTSYNN…CNATYGFVCI (102 aa).

This chain is Putative C-type lectin protein FPV003/FPV258, found in Fowlpox virus (strain NVSL) (FPV).